The primary structure comprises 534 residues: NAD(P)H-quinone oxidoreductase chain 4 (534 aa).

Transmembrane regions (helical) follow at residues 12-32, 44-64, 96-116, 120-140, 144-164, 176-196, 220-240, 251-271, 285-305, 314-334, 340-360, 384-404, 425-445, and 472-492; these read FPWLSASILFPIGSALVIPFF, FALSIALITFLITVGSYINGF, MPLILLTSFITALAVLAAWPV, PKLFFFLILVMDGGQIAVFAV, LLFFLTWELELIPVYLLLAIW, FIIYTAGSSIFILLAALAMGF, ILCYVGLLIAFGVKLPIVPLH, TAPVHMLLAGILLKMGGYALL, FAPLLIVLGVVNIIYAALTSF, IAYSSISHMGFVLIGIGSFSS, AMLQMVSHGLIGASLFFLVGA, FALWTACSLASLALPGMSGFV, VVMASLAAIGVILTPIYLLSM, and VYIIACLLLPIIGIGLYPRLV.

This sequence belongs to the complex I subunit 4 family.

It is found in the cellular thylakoid membrane. It carries out the reaction a plastoquinone + NADH + (n+1) H(+)(in) = a plastoquinol + NAD(+) + n H(+)(out). It catalyses the reaction a plastoquinone + NADPH + (n+1) H(+)(in) = a plastoquinol + NADP(+) + n H(+)(out). Its function is as follows. NDH-1 shuttles electrons from NAD(P)H, via FMN and iron-sulfur (Fe-S) centers, to quinones in the respiratory chain. The immediate electron acceptor for the enzyme in this species is believed to be plastoquinone. Couples the redox reaction to proton translocation (for every two electrons transferred, four hydrogen ions are translocated across the cytoplasmic membrane), and thus conserves the redox energy in a proton gradient. This is NAD(P)H-quinone oxidoreductase chain 4 from Prochlorococcus marinus (strain MIT 9215).